Reading from the N-terminus, the 394-residue chain is Phosphoglycerate kinase (394 aa).

Residues 21-23 (DLN), Arg37, 60-63 (HLGR), Arg115, and Arg148 contribute to the substrate site. ATP is bound by residues Lys199, Glu321, and 347–350 (GGDT).

The protein belongs to the phosphoglycerate kinase family. As to quaternary structure, monomer.

It is found in the cytoplasm. It carries out the reaction (2R)-3-phosphoglycerate + ATP = (2R)-3-phospho-glyceroyl phosphate + ADP. It participates in carbohydrate degradation; glycolysis; pyruvate from D-glyceraldehyde 3-phosphate: step 2/5. The protein is Phosphoglycerate kinase of Aromatoleum aromaticum (strain DSM 19018 / LMG 30748 / EbN1) (Azoarcus sp. (strain EbN1)).